A 641-amino-acid chain; its full sequence is Sodium-dependent nutrient amino acid transporter 1 (641 aa).

A compositionally biased stretch (polar residues) spans Met1–Glu21. Residues Met1–Thr37 are disordered. Residues Met1–Asn38 lie on the Cytoplasmic side of the membrane. Over residues Asn22–Glu35 the composition is skewed to basic and acidic residues. A run of 3 helical transmembrane segments spans residues Trp39 to Val59, Gly72 to Leu92, and Thr125 to Val145. N-linked (GlcNAc...) asparagine glycosylation is found at Asn181, Asn190, and Asn198. 9 helical membrane passes run Pro229–Met249, Ala258–Val278, Ala307–Ser327, Ile341–Leu361, Leu401–Leu421, Val441–Gly461, Thr474–Leu494, Cys516–Ile536, and Ile552–Tyr572.

It belongs to the sodium:neurotransmitter symporter (SNF) (TC 2.A.22) family.

Its subcellular location is the membrane. Functionally, unusual broad substrate spectrum amino acid:sodium cotransporter that promotes absorption of the D isomers of essential amino acids. Neutral amino acids are the preferred substrates, especially methionine and phenylalanine. The chain is Sodium-dependent nutrient amino acid transporter 1 from Drosophila willistoni (Fruit fly).